A 205-amino-acid polypeptide reads, in one-letter code: Ribosomal RNA small subunit methyltransferase J (205 aa).

S-adenosyl-L-methionine-binding positions include 56–57 (RD), 72–73 (ER), and Asp124.

The protein belongs to the methyltransferase superfamily. RsmJ family.

Its subcellular location is the cytoplasm. It carries out the reaction guanosine(1516) in 16S rRNA + S-adenosyl-L-methionine = N(2)-methylguanosine(1516) in 16S rRNA + S-adenosyl-L-homocysteine + H(+). In terms of biological role, specifically methylates the guanosine in position 1516 of 16S rRNA. The protein is Ribosomal RNA small subunit methyltransferase J of Brucella anthropi (strain ATCC 49188 / DSM 6882 / CCUG 24695 / JCM 21032 / LMG 3331 / NBRC 15819 / NCTC 12168 / Alc 37) (Ochrobactrum anthropi).